The primary structure comprises 512 residues: Ferredoxin--nitrite reductase (512 aa).

[4Fe-4S] cluster is bound by residues C396, C402, C437, and C441. Residue C441 participates in siroheme binding.

The protein belongs to the nitrite and sulfite reductase 4Fe-4S domain family.

It carries out the reaction 6 oxidized [2Fe-2S]-[ferredoxin] + NH4(+) + 2 H2O = nitrite + 6 reduced [2Fe-2S]-[ferredoxin] + 8 H(+). This is Ferredoxin--nitrite reductase (nirA) from Synechococcus elongatus (strain ATCC 33912 / PCC 7942 / FACHB-805) (Anacystis nidulans R2).